Consider the following 214-residue polypeptide: MQKLRAAWHAHLPYDASIPLNQRRWITGEGSLTARLMSASAAFRVRRLAQAPQLPLADEWRALGLIRPLPAITREVLLICDETPAVFAHTIVDPRYARRDWPFLRGLGNRPLGGALFVDPRVRRDPFQFARLTPCHPLRQALQRVLPALSSEPMLPARRSVFRRGGGAMLVTEVFLPDLLTRAAPENTGAGGTRLPRRIDTHHTPSKQEERPES.

3 residues coordinate substrate: Arg74, Leu112, and Glu173. Residues 183 to 214 (AAPENTGAGGTRLPRRIDTHHTPSKQEERPES) are disordered. Residues 197 to 214 (RRIDTHHTPSKQEERPES) show a composition bias toward basic and acidic residues.

Belongs to the UbiC family.

Its subcellular location is the cytoplasm. It catalyses the reaction chorismate = 4-hydroxybenzoate + pyruvate. The protein operates within cofactor biosynthesis; ubiquinone biosynthesis. In terms of biological role, removes the pyruvyl group from chorismate, with concomitant aromatization of the ring, to provide 4-hydroxybenzoate (4HB) for the ubiquinone pathway. In Cupriavidus metallidurans (strain ATCC 43123 / DSM 2839 / NBRC 102507 / CH34) (Ralstonia metallidurans), this protein is Probable chorismate pyruvate-lyase.